The following is a 727-amino-acid chain: MSYSVTLTGPGPWGFRLQGGKDFNMPLTISRITPGSKAAQSQLSQGDLVVAIDGVNTDTMTHLEAQNKIKSASYNLSLTLQKSKRPIPISTTAPPVQTPLPVIPHQKDPALDTNGSLVAPSPSPEARASPGTPGTPELRPTFSPAFSRPSAFSSLAEASDPGPPRASLRAKTSPEGARDLLGPKALPGSSQPRQYNNPIGLYSAETLREMAQMYQMSLRGKASGVGLPGGSLPIKDLAVDSASPVYQAVIKSQNKPEDEADEWARRSSNLQSRSFRILAQMTGTEFMQDPDEEALRRSSTPIEHAPVCTSQATTPLLPASAQPPAAASPSAASPPLATAAAHTAIASASTTAPASSPADSPRPQASSYSPAVAASSAPATHTSYSEGPAAPAPKPRVVTTASIRPSVYQPVPASTYSPSPGANYSPTPYTPSPAPAYTPSPAPAYTPSPVPTYTPSPAPAYTPSPAPNYNPAPSVAYSGGPAEPASRPPWVTDDSFSQKFAPGKSTTSISKQTLPRGGPAYTPAGPQVPPLARGTVQRAERFPASSRTPLCGHCNNVIRGPFLVAMGRSWHPEEFTCAYCKTSLADVCFVEEQNNVYCERCYEQFFAPLCAKCNTKIMGEVMHALRQTWHTTCFVCAACKKPFGNSLFHMEDGEPYCEKDYINLFSTKCHGCDFPVEAGDKFIEALGHTWHDTCFICAVCHVNLEGQPFYSKKDRPLCKKHAHTINL.

Positions 1–84 (MSYSVTLTGP…NLSLTLQKSK (84 aa)) constitute a PDZ domain. 3 positions are modified to phosphoserine: serine 44, serine 121, and serine 123. The segment at 86 to 197 (PIPISTTAPP…GSSQPRQYNN (112 aa)) is disordered. Residues 140 to 156 (PTFSPAFSRPSAFSSLA) show a composition bias toward low complexity. Residues 188–197 (GSSQPRQYNN) are compositionally biased toward polar residues. Serine 217 carries the phosphoserine modification. Arginine 219 is subject to Omega-N-methylarginine. Residue serine 223 is modified to Phosphoserine. Disordered regions lie at residues 284-440 (TEFM…YTPS) and 472-529 (APSV…PQVP). The segment covering 312 to 385 (ATTPLLPASA…SAPATHTSYS (74 aa)) has biased composition (low complexity). Residues 428–440 (PYTPSPAPAYTPS) are compositionally biased toward pro residues. Residues 494–513 (DSFSQKFAPGKSTTSISKQT) show a composition bias toward polar residues. Residues arginine 516 and arginine 533 each carry the omega-N-methylarginine modification. 3 LIM zinc-binding domains span residues 549–607 (PLCG…QFFA), 608–667 (PLCA…LFST), and 668–727 (KCHG…TINL).

In terms of assembly, interacts via its LIM domains with various PKC isoforms. Interacts via its PDZ domain with the ACTN2 C-terminal region. Interacts with MYOZ1, MYOZ2 and MYOZ3. As to expression, expressed primarily in skeletal muscle and to a lesser extent in heart. Also detected in brain and placenta.

It localises to the cytoplasm. Its subcellular location is the perinuclear region. The protein resides in the cell projection. It is found in the pseudopodium. The protein localises to the cytoskeleton. It localises to the myofibril. Its subcellular location is the sarcomere. The protein resides in the z line. Functionally, may function as an adapter in striated muscle to couple protein kinase C-mediated signaling via its LIM domains to the cytoskeleton. The sequence is that of LIM domain-binding protein 3 from Homo sapiens (Human).